Consider the following 1368-residue polypeptide: DNA-directed RNA polymerase subunit beta (1368 aa).

It belongs to the RNA polymerase beta chain family. The RNAP catalytic core consists of 2 alpha, 1 beta, 1 beta' and 1 omega subunit. When a sigma factor is associated with the core the holoenzyme is formed, which can initiate transcription.

It carries out the reaction RNA(n) + a ribonucleoside 5'-triphosphate = RNA(n+1) + diphosphate. DNA-dependent RNA polymerase catalyzes the transcription of DNA into RNA using the four ribonucleoside triphosphates as substrates. The chain is DNA-directed RNA polymerase subunit beta from Herminiimonas arsenicoxydans.